The sequence spans 369 residues: F-box protein UCC1 (369 aa).

An F-box domain is found at 8–45 (LMDLPLEIHLSLLEYVPNELRAVNKYFYVLHNHSYKEK).

As to quaternary structure, component of the SCF(UCC1) E3 ubiquitin-protein ligase complex composed of CDC53, SKP1, RBX1 and UCC1. Interacts with CIT2. Monoubiquitinated by UBC4.

It functions in the pathway protein modification; protein ubiquitination. Substrate recognition component of the SKP1-CUL1-F-box protein E3 ubiquitin-protein ligase complex SCF(UCC1) which mediates the ubiquitination and subsequent proteasomal degradation of target proteins. The SCF(UCC1) complex acts as a metabolic switch for the glyoxylate cycle and regulates the level of CIT2 protein to maintain citrate homeostasis. The chain is F-box protein UCC1 (UCC1) from Saccharomyces cerevisiae (strain ATCC 204508 / S288c) (Baker's yeast).